The primary structure comprises 546 residues: Chaperonin GroEL (546 aa).

ATP is bound by residues 29-32, lysine 50, 86-90, glycine 412, 476-478, and aspartate 492; these read TMGP, DGTTT, and NAA.

The protein belongs to the chaperonin (HSP60) family. Forms a cylinder of 14 subunits composed of two heptameric rings stacked back-to-back. Interacts with the co-chaperonin GroES.

The protein localises to the cytoplasm. It carries out the reaction ATP + H2O + a folded polypeptide = ADP + phosphate + an unfolded polypeptide.. Its function is as follows. Together with its co-chaperonin GroES, plays an essential role in assisting protein folding. The GroEL-GroES system forms a nano-cage that allows encapsulation of the non-native substrate proteins and provides a physical environment optimized to promote and accelerate protein folding. May play a protective role against the defense mechanisms generated by the infected macrophages. In Legionella micdadei (Tatlockia micdadei), this protein is Chaperonin GroEL.